The following is a 366-amino-acid chain: Chorismate synthase (366 aa).

Residues arginine 48 and arginine 54 each contribute to the NADP(+) site. Residues arginine 125–serine 127, asparagine 238–alanine 239, glycine 278, lysine 293–serine 297, and arginine 319 each bind FMN.

This sequence belongs to the chorismate synthase family. In terms of assembly, homotetramer. The cofactor is FMNH2.

The enzyme catalyses 5-O-(1-carboxyvinyl)-3-phosphoshikimate = chorismate + phosphate. The protein operates within metabolic intermediate biosynthesis; chorismate biosynthesis; chorismate from D-erythrose 4-phosphate and phosphoenolpyruvate: step 7/7. Functionally, catalyzes the anti-1,4-elimination of the C-3 phosphate and the C-6 proR hydrogen from 5-enolpyruvylshikimate-3-phosphate (EPSP) to yield chorismate, which is the branch point compound that serves as the starting substrate for the three terminal pathways of aromatic amino acid biosynthesis. This reaction introduces a second double bond into the aromatic ring system. This Laribacter hongkongensis (strain HLHK9) protein is Chorismate synthase.